The primary structure comprises 258 residues: Flagellin B3 (258 aa).

The propeptide occupies 1–8 (MRFLKKRG).

This sequence belongs to the archaeal flagellin family.

The protein resides in the archaeal flagellum. In terms of biological role, flagellin is the subunit protein which polymerizes to form the filaments of archaeal flagella. The protein is Flagellin B3 (flaB3) of Thermococcus kodakarensis (strain ATCC BAA-918 / JCM 12380 / KOD1) (Pyrococcus kodakaraensis (strain KOD1)).